Consider the following 357-residue polypeptide: Sorbitol dehydrogenase (357 aa).

An N-acetylalanine modification is found at A2. A Zn(2+)-binding site is contributed by C45. A substrate-binding site is contributed by Y51. Zn(2+)-binding residues include H70 and E71. E156 provides a ligand contact to substrate. I184, D204, and R209 together coordinate NAD(+). Residues S211 and S225 each carry the phosphoserine modification. Residues 273–275 (VGL) and 297–299 (VFR) contribute to the NAD(+) site. Residues R299 and Y300 each contribute to the substrate site.

It belongs to the zinc-containing alcohol dehydrogenase family. As to quaternary structure, homotetramer. Requires Zn(2+) as cofactor.

It is found in the mitochondrion membrane. The protein localises to the cell projection. The protein resides in the cilium. It localises to the flagellum. The enzyme catalyses xylitol + NAD(+) = D-xylulose + NADH + H(+). It carries out the reaction L-iditol + NAD(+) = keto-L-sorbose + NADH + H(+). It catalyses the reaction keto-D-fructose + NADH + H(+) = D-sorbitol + NAD(+). Functionally, polyol dehydrogenase that catalyzes the reversible NAD(+)-dependent oxidation of various sugar alcohols. Is active with xylitol, L-iditol and D-sorbitol (D-glucitol) as substrates, leading to the C2-oxidized products D-xylulose, L-sorbose and D-fructose, respectively. Is a key enzyme in the polyol pathway that interconverts glucose and fructose via sorbitol, which constitutes an important alternate route for glucose metabolism. May play a role in sperm motility by using sorbitol as an alternative energy source for sperm motility. The protein is Sorbitol dehydrogenase (SORD) of Macaca fascicularis (Crab-eating macaque).